Consider the following 1259-residue polypeptide: Protein flightless-1 homolog (1259 aa).

15 LRR repeats span residues 7–32, 33–55, 56–78, 80–103, 104–126, 128–149, 150–173, 176–201, 222–245, 247–268, 269–291, 293–316, 317–339, 340–363, and 365–385; these read LPFIRGVDLSGNDFKGGNFPEHVKSM, TSLRWLKLNRTGLCYLPEELASL, QKLEHLSVSHNSLTTLHGELSSL, NLRAVVARANNLKNSGVPDDIFQL, DDLSVLDLSHNQLTEIPRDLENS, NMLVLNLSHNSIDNIPNQLFIN, LTDLLYLDLSDNNLDSLPPQMRRL, LQTLILNNNPLMHAQLRQLPVMVSLQ, LSNLTDVDLSCNDLTRVPECLYSL, NLKRLNLSSNQISELSLCIDQW, TKLETLNLSRNQLTSLPSAICKL, KLKKLYVNSNKIDFDGLPSGVGKL, SNLVEFMAANNNLELVPEGLCRC, GKLKKLVLNKNRLVTLPEAIHFLT, and LEVLDVRENPNLVMPPKPVDR. 4 Gelsolin-like repeats span residues 509 to 589, 628 to 702, 757 to 830, and 1170 to 1225; these read IPIQ…SEEF, NIRL…PEFW, DVVP…CQVF, and EKCS…RSKD.

Expressed in ventricular cardiomyocytes, where it particularly localizes to intercalated disks and costamere-like structures (at protein level).

The protein resides in the nucleus. It is found in the cytoplasm. The protein localises to the cytoskeleton. Its subcellular location is the microtubule organizing center. It localises to the centrosome. The protein resides in the cell junction. It is found in the focal adhesion. Is a regulator of actin polymerization, required for proper myofibril organization and the assembly of cardiomyocyte cell adhesion complexes. Is a regulator of the length of sarcomeric thin filaments. Regulates cytoskeletal rearrangements involved in cytokinesis and cell migration, by inhibiting Rac1-dependent paxillin phosphorylation. May play a role as coactivator in transcriptional activation by hormone-activated nuclear receptors (NR) and acts in cooperation with NCOA2 and CARM1. Involved in estrogen hormone signaling. This is Protein flightless-1 homolog from Danio rerio (Zebrafish).